We begin with the raw amino-acid sequence, 739 residues long: Adenosylcobalamin-dependent ribonucleoside-triphosphate reductase (739 aa).

A disulfide bridge connects residues Cys119 and Cys419. The tract at residues 147–158 (SMPFSFLFDELM) is effector region-1. The tract at residues 168-313 (ARSNISQIPR…ICNLIGKAVV (146 aa)) is effector region-2. Active-site residues include Cys408 and Glu410. The adenosylcobalamin-binding-1 stretch occupies residues 565–626 (FHYGAYLIQR…NPNFASAGTV (62 aa)). The segment at 685 to 724 (LQQAPKEPIDKETYEKRSQEITGNVEEVFSQLNSDVKDLE) is adenosylcobalamin-binding-2.

The protein belongs to the class II ribonucleoside-triphosphate reductase family. As to quaternary structure, monomer. It depends on adenosylcob(III)alamin as a cofactor.

The catalysed reaction is a 2'-deoxyribonucleoside 5'-triphosphate + [thioredoxin]-disulfide + H2O = a ribonucleoside 5'-triphosphate + [thioredoxin]-dithiol. Its activity is regulated as follows. Allosterically regulated by ATP and dNTP. The polypeptide is Adenosylcobalamin-dependent ribonucleoside-triphosphate reductase (rtpR) (Lactobacillus delbrueckii subsp. bulgaricus (strain ATCC BAA-365 / Lb-18)).